The sequence spans 147 residues: Protein-export protein SecB (147 aa).

It belongs to the SecB family. Homotetramer, a dimer of dimers. One homotetramer interacts with 1 SecA dimer.

It is found in the cytoplasm. One of the proteins required for the normal export of preproteins out of the cell cytoplasm. It is a molecular chaperone that binds to a subset of precursor proteins, maintaining them in a translocation-competent state. It also specifically binds to its receptor SecA. The chain is Protein-export protein SecB from Neisseria meningitidis serogroup B (strain ATCC BAA-335 / MC58).